The following is a 319-amino-acid chain: Ribose-phosphate pyrophosphokinase (319 aa).

Residues 40–42 and 99–100 each bind ATP; these read DGE and RQ. Mg(2+) contacts are provided by His134 and Asp174. Lys198 is a catalytic residue. D-ribose 5-phosphate-binding positions include Arg200, Asp224, and 228–232; that span reads DTAGT.

Belongs to the ribose-phosphate pyrophosphokinase family. Class I subfamily. As to quaternary structure, homohexamer. Mg(2+) is required as a cofactor.

It localises to the cytoplasm. The enzyme catalyses D-ribose 5-phosphate + ATP = 5-phospho-alpha-D-ribose 1-diphosphate + AMP + H(+). The protein operates within metabolic intermediate biosynthesis; 5-phospho-alpha-D-ribose 1-diphosphate biosynthesis; 5-phospho-alpha-D-ribose 1-diphosphate from D-ribose 5-phosphate (route I): step 1/1. Functionally, involved in the biosynthesis of the central metabolite phospho-alpha-D-ribosyl-1-pyrophosphate (PRPP) via the transfer of pyrophosphoryl group from ATP to 1-hydroxyl of ribose-5-phosphate (Rib-5-P). In Coxiella burnetii (strain RSA 493 / Nine Mile phase I), this protein is Ribose-phosphate pyrophosphokinase.